Here is a 483-residue protein sequence, read N- to C-terminus: Serralysin (483 aa).

H184 serves as a coordination point for Zn(2+). The active site involves E185. Residues H188 and H194 each coordinate Zn(2+). 8 residues coordinate Ca(2+): R263, D266, D295, G297, G298, D300, T337, and E339. Hemolysin-type calcium-binding repeat units follow at residues 342-359 (IGGSGNDILIGNDAENIL) and 360-377 (KGGAGDDIIYGGLGADQL).

Belongs to the peptidase M10B family. Requires Zn(2+) as cofactor. The cofactor is Ca(2+).

It is found in the secreted. It catalyses the reaction Preferential cleavage of bonds with hydrophobic residues in P1'.. Its activity is regulated as follows. Inhibited by 8 mM 1,10-phenanthroline and 10 mM EDTA, but not by PMSF. In terms of biological role, involved in the inhibition of insect antibacterial peptides. Reduces the antibacterial activity of G.mellonella hemolymph by 50%. Reduces the antibacterial activity of cecropin A by 80% and cecropin B by 75%. The polypeptide is Serralysin (Photorhabdus sp. (strain Az29)).